Reading from the N-terminus, the 246-residue chain is Auxin-responsive protein IAA25 (246 aa).

Residues M1–E22 are disordered. Basic and acidic residues predominate over residues L10–E22. Residues L28 to L32 carry the EAR-like (transcriptional repression) motif. The region spanning T143–D238 is the PB1 domain.

This sequence belongs to the Aux/IAA family. As to quaternary structure, homodimers and heterodimers. In terms of tissue distribution, highly expressed in flowers. Expressed in roots and seedlings.

The protein resides in the nucleus. In terms of biological role, aux/IAA proteins are short-lived transcriptional factors that function as repressors of early auxin response genes at low auxin concentrations. This chain is Auxin-responsive protein IAA25 (IAA25), found in Oryza sativa subsp. japonica (Rice).